The sequence spans 272 residues: MNNRVHQGHFARKRFGQNFLTDQFVIDSIAAAINPQPGQAVLEIGPGLGALTEPVGERMDKMTVVELDRDLAARLQVHPQLKDKLTIIQQDAMTVNFGELSQQRGKPLRVFGNLPYNISTPLMFHLFSYTDAIADMHFMLQKEVVNRLVAGPGSKTFGRLSVMAQYYCQVIPVLEVPPTAFTPAPKVDSAVVRLVPHKSIPHPVKNIRMLSRITTQAFNQRRKTIRNSLGDLFTVEQLTELGIDPSTRAENISVEQYCKMANWLSEQPEMQS.

6 residues coordinate S-adenosyl-L-methionine: asparagine 18, leucine 20, glycine 45, glutamate 66, aspartate 91, and asparagine 113.

It belongs to the class I-like SAM-binding methyltransferase superfamily. rRNA adenine N(6)-methyltransferase family. RsmA subfamily.

It localises to the cytoplasm. It catalyses the reaction adenosine(1518)/adenosine(1519) in 16S rRNA + 4 S-adenosyl-L-methionine = N(6)-dimethyladenosine(1518)/N(6)-dimethyladenosine(1519) in 16S rRNA + 4 S-adenosyl-L-homocysteine + 4 H(+). Functionally, specifically dimethylates two adjacent adenosines (A1518 and A1519) in the loop of a conserved hairpin near the 3'-end of 16S rRNA in the 30S particle. May play a critical role in biogenesis of 30S subunits. This Photorhabdus laumondii subsp. laumondii (strain DSM 15139 / CIP 105565 / TT01) (Photorhabdus luminescens subsp. laumondii) protein is Ribosomal RNA small subunit methyltransferase A.